Consider the following 732-residue polypeptide: Putative pectinesterase/pectinesterase inhibitor 28 (732 aa).

The chain crosses the membrane as a helical span at residues valine 17–valine 37. 4 N-linked (GlcNAc...) asparagine glycosylation sites follow: asparagine 40, asparagine 93, asparagine 278, and asparagine 297. Positions threonine 51–methionine 204 are pectinesterase inhibitor 28. The interval aspartate 252–aspartate 548 is pectinesterase 28. Positions 327 and 357 each coordinate substrate. The Proton donor; for pectinesterase activity role is filled by aspartate 380. Cysteine 394 and cysteine 414 are disulfide-bonded. The Nucleophile; for pectinesterase activity role is filled by aspartate 401. The N-linked (GlcNAc...) asparagine glycan is linked to asparagine 413. The substrate site is built by arginine 469 and tryptophan 471. Residues asparagine 566, asparagine 570, and asparagine 581 are each glycosylated (N-linked (GlcNAc...) asparagine). 2 stretches are compositionally biased toward low complexity: residues asparagine 570–serine 620 and proline 633–glycine 732. The interval asparagine 570–glycine 732 is disordered.

It in the N-terminal section; belongs to the PMEI family. This sequence in the C-terminal section; belongs to the pectinesterase family. As to expression, expressed in flower buds.

The protein resides in the membrane. The catalysed reaction is [(1-&gt;4)-alpha-D-galacturonosyl methyl ester](n) + n H2O = [(1-&gt;4)-alpha-D-galacturonosyl](n) + n methanol + n H(+). The protein operates within glycan metabolism; pectin degradation; 2-dehydro-3-deoxy-D-gluconate from pectin: step 1/5. Functionally, acts in the modification of cell walls via demethylesterification of cell wall pectin. This is Putative pectinesterase/pectinesterase inhibitor 28 (PME28) from Arabidopsis thaliana (Mouse-ear cress).